The sequence spans 467 residues: Ammonium transporter Rh type C (467 aa).

Residues 1-3 (MRL) lie on the Cytoplasmic side of the membrane. Residues 4-24 (RLPVVCFLWEIAMIVLFGIFV) form a helical membrane-spanning segment. Residues 25 to 55 (RYNDEADPHWSEFMKAQNITSDIQNDYYFRY) lie on the Extracellular side of the membrane. Asn-42 carries an N-linked (GlcNAc...) asparagine glycan. The chain crosses the membrane as a helical span at residues 56–76 (PSFQDVHVMIFVGFGFLMTFL). Over 77 to 80 (KRYG) the chain is Cytoplasmic. Residues 81-101 (FGSVAFNFLLAAFGIQWAILM) traverse the membrane as a helical segment. Over 102–119 (QGWFHTFKNGKILIGVES) the chain is Extracellular. Residues 120–139 (LINADFCVGSVCIAFGAILG) form a helical membrane-spanning segment. At 140–145 (KVSPVQ) the chain is on the cytoplasmic side. The helical transmembrane segment at 146 to 168 (IMVMTLFQVTLFAVNEWILLNLL) threads the bilayer. At 169–173 (HVNDA) the chain is on the extracellular side. Residues 174–194 (GGSMTIHTFGAYFGLTVAWIL) form a helical membrane-spanning segment. At 195-213 (NRPRLKQTNDKEGSVYVSD) the chain is on the cytoplasmic side. Residues 214 to 234 (LFSMIGTLFLWMFWPSFNSAV) form a helical membrane-spanning segment. Over 235 to 245 (SYHGDAQHRAA) the chain is Extracellular. Residues 246–266 (INTYCSLAACVLTTVAISSVV) form a helical membrane-spanning segment. Topologically, residues 267–271 (NKKGK) are cytoplasmic. A helical transmembrane segment spans residues 272 to 292 (LEMVHIQNATLAGGVAVGTAA). Residues 293–295 (EMM) are Extracellular-facing. The helical transmembrane segment at 296 to 316 (LTPYGSLIVGFICGIVSTLGF) threads the bilayer. The Cytoplasmic portion of the chain corresponds to 317-337 (TYCSPFLSNKLRLHDTCGIHN). The chain crosses the membrane as a helical span at residues 338 to 358 (LHAMPGLIGGIVGAVTAACAT). Topologically, residues 359-390 (EAVYTADGLKKMFRFEGDYATRTPSMQGGYQA) are extracellular. A helical transmembrane segment spans residues 391 to 411 (AGLCVSLAFGLVGGTVVGCIL). Residues 412 to 467 (KLPIWGDPSDENCFDDEVYWELPEEDEEEHLGAANQYVTHLPENFKLPDRTEVAFK) are Cytoplasmic-facing.

The protein belongs to the ammonium transporter (TC 2.A.49) family. Rh subfamily. In terms of assembly, homotrimer.

Its subcellular location is the apical cell membrane. In terms of biological role, functions as an ammonia transporter. This is Ammonium transporter Rh type C (rhcg) from Xenopus tropicalis (Western clawed frog).